Here is a 664-residue protein sequence, read N- to C-terminus: Peroxisomal acyl-coenzyme A oxidase 1 (664 aa).

Residues Y135, Q137, T138, S144, G177, R310, Q330, R333, G401, and T422 each contribute to the FAD site. The active-site Proton acceptor is the E424. D426 serves as a coordination point for FAD. Cysteines 467 and 576 form a disulfide. Positions 662 to 664 (ARL) match the Microbody targeting signal motif.

It belongs to the acyl-CoA oxidase family. In terms of assembly, homodimer. The cofactor is FAD. Expressed mainly in flowers and young seedlings. Lower expression in roots, leaves and bracts.

The protein localises to the peroxisome. It carries out the reaction a 2,3-saturated acyl-CoA + O2 = a (2E)-enoyl-CoA + H2O2. Its function is as follows. Catalyzes the desaturation of both long- and medium-chain acyl-CoAs to 2-trans-enoyl-CoAs. Most active with C14-CoA. Activity on long-chain mono-unsaturated substrates is 40% higher than with the corresponding saturated substrates. Seems to be an important factor in the general metabolism of root tips. May be involved in the biosynthesis of jasmonic acid. The polypeptide is Peroxisomal acyl-coenzyme A oxidase 1 (Arabidopsis thaliana (Mouse-ear cress)).